We begin with the raw amino-acid sequence, 947 residues long: Bifunctional glutamine synthetase adenylyltransferase/adenylyl-removing enzyme (947 aa).

The interval 1–440 (MTPLSSPLSQ…VFNELIGDDE (440 aa)) is adenylyl removase. The segment at 450–947 (SEPWREVWQD…ASWRKWLVAV (498 aa)) is adenylyl transferase.

It belongs to the GlnE family. Mg(2+) serves as cofactor.

It catalyses the reaction [glutamine synthetase]-O(4)-(5'-adenylyl)-L-tyrosine + phosphate = [glutamine synthetase]-L-tyrosine + ADP. The catalysed reaction is [glutamine synthetase]-L-tyrosine + ATP = [glutamine synthetase]-O(4)-(5'-adenylyl)-L-tyrosine + diphosphate. In terms of biological role, involved in the regulation of glutamine synthetase GlnA, a key enzyme in the process to assimilate ammonia. When cellular nitrogen levels are high, the C-terminal adenylyl transferase (AT) inactivates GlnA by covalent transfer of an adenylyl group from ATP to specific tyrosine residue of GlnA, thus reducing its activity. Conversely, when nitrogen levels are low, the N-terminal adenylyl removase (AR) activates GlnA by removing the adenylyl group by phosphorolysis, increasing its activity. The regulatory region of GlnE binds the signal transduction protein PII (GlnB) which indicates the nitrogen status of the cell. The polypeptide is Bifunctional glutamine synthetase adenylyltransferase/adenylyl-removing enzyme (Salmonella heidelberg (strain SL476)).